The chain runs to 225 residues: Protein-L-isoaspartate O-methyltransferase (225 aa).

The active site involves S75.

It belongs to the methyltransferase superfamily. L-isoaspartyl/D-aspartyl protein methyltransferase family.

Its subcellular location is the cytoplasm. The enzyme catalyses [protein]-L-isoaspartate + S-adenosyl-L-methionine = [protein]-L-isoaspartate alpha-methyl ester + S-adenosyl-L-homocysteine. In terms of biological role, catalyzes the methyl esterification of L-isoaspartyl residues in peptides and proteins that result from spontaneous decomposition of normal L-aspartyl and L-asparaginyl residues. It plays a role in the repair and/or degradation of damaged proteins. The chain is Protein-L-isoaspartate O-methyltransferase from Stenotrophomonas maltophilia (strain R551-3).